Reading from the N-terminus, the 109-residue chain is B melanoma antigen 3 (109 aa).

Positions 1–17 are cleaved as a signal peptide; it reads MAAGVVFLALSAQLLQA.

It belongs to the BAGE family. Not expressed in normal tissues except in testis. Expressed in melanoma, bladder and lung carcinomas.

The protein localises to the secreted. Its function is as follows. Unknown. Candidate gene encoding tumor antigens. This chain is B melanoma antigen 3 (BAGE3), found in Homo sapiens (Human).